The sequence spans 66 residues: Stress-associated endoplasmic reticulum protein 1 (66 aa).

Residues Met1–Ala31 form a disordered region. The span at Asn17–Asn30 shows a compositional bias: polar residues. A helical transmembrane segment spans residues Gly39–Ile59.

It belongs to the RAMP4 family. In terms of assembly, interacts with SEC61B, SEC61A1 and the SEC61 complex. Interacts with CANX.

It is found in the membrane. The protein localises to the endoplasmic reticulum membrane. In terms of biological role, interacts with target proteins during their translocation into the lumen of the endoplasmic reticulum. Protects unfolded target proteins against degradation during ER stress. May facilitate glycosylation of target proteins after termination of ER stress. May modulate the use of N-glycosylation sites on target proteins. The sequence is that of Stress-associated endoplasmic reticulum protein 1 (SERP1) from Bos taurus (Bovine).